The sequence spans 137 residues: Large ribosomal subunit protein uL16 (137 aa).

Belongs to the universal ribosomal protein uL16 family. In terms of assembly, part of the 50S ribosomal subunit.

In terms of biological role, binds 23S rRNA and is also seen to make contacts with the A and possibly P site tRNAs. The chain is Large ribosomal subunit protein uL16 from Xylella fastidiosa (strain M23).